The sequence spans 329 residues: Glycerol-3-phosphate dehydrogenase [NAD(P)+] (329 aa).

W11, R30, and K103 together coordinate NADPH. Sn-glycerol 3-phosphate-binding residues include K103, G132, and S134. A136 provides a ligand contact to NADPH. Sn-glycerol 3-phosphate contacts are provided by K187, D240, S250, R251, and N252. K187 serves as the catalytic Proton acceptor. R251 contacts NADPH. NADPH is bound by residues V275 and E277.

Belongs to the NAD-dependent glycerol-3-phosphate dehydrogenase family.

The protein localises to the cytoplasm. The catalysed reaction is sn-glycerol 3-phosphate + NAD(+) = dihydroxyacetone phosphate + NADH + H(+). The enzyme catalyses sn-glycerol 3-phosphate + NADP(+) = dihydroxyacetone phosphate + NADPH + H(+). The protein operates within membrane lipid metabolism; glycerophospholipid metabolism. Catalyzes the reduction of the glycolytic intermediate dihydroxyacetone phosphate (DHAP) to sn-glycerol 3-phosphate (G3P), the key precursor for phospholipid synthesis. In Dechloromonas aromatica (strain RCB), this protein is Glycerol-3-phosphate dehydrogenase [NAD(P)+].